The primary structure comprises 267 residues: Small ribosomal subunit protein uS2 (267 aa).

The tract at residues 222–267 is disordered; sequence GKALRDQDSEEEIQNKEQDEVSQEEKDDILDEAMNEEDFEIPEDKE. Positions 223–240 are enriched in basic and acidic residues; sequence KALRDQDSEEEIQNKEQD. The segment covering 241-267 has biased composition (acidic residues); sequence EVSQEEKDDILDEAMNEEDFEIPEDKE.

Belongs to the universal ribosomal protein uS2 family.

This is Small ribosomal subunit protein uS2 from Campylobacter hominis (strain ATCC BAA-381 / DSM 21671 / CCUG 45161 / LMG 19568 / NCTC 13146 / CH001A).